Consider the following 416-residue polypeptide: Enterobactin exporter EntS (416 aa).

Residues 1-21 (MNKQSWLLNLSLLKTHPAFRA) lie on the Cytoplasmic side of the membrane. The chain crosses the membrane as a helical span at residues 22–42 (VFLARFISIVSLGLLGVAVPV). The Periplasmic portion of the chain corresponds to 43–55 (QIQMMTHSTWQVG). A helical membrane pass occupies residues 56 to 76 (LSVTLTGGAMFVGLMVGGVLA). The Cytoplasmic segment spans residues 77–83 (DRYERKK). A helical membrane pass occupies residues 84–104 (VILLARGTCGIGFIGLCLNAL). Residues 105–109 (LPEPS) lie on the Periplasmic side of the membrane. Residues 110 to 130 (LLAIYLLGLWDGFFASLGVTA) form a helical membrane-spanning segment. Topologically, residues 131-156 (LLAATPALVGRENLMQAGAITMLTVR) are cytoplasmic. Residues 157-177 (LGSVISPMIGGLLLATGGVAW) traverse the membrane as a helical segment. Residue Asn178 is a topological domain, periplasmic. Residues 179–199 (YGLAAAGTFITLLPLLSLPAL) traverse the membrane as a helical segment. Over 200–218 (PPPPQPREHPLKSLLAGFR) the chain is Cytoplasmic. A helical membrane pass occupies residues 219–239 (FLLASPLVGGIALLGGLLTMA). The Periplasmic portion of the chain corresponds to 240–256 (SAVRVLYPALADNWQMS). The helical transmembrane segment at 257-277 (AAQIGFLYAAIPLGAAIGALT) threads the bilayer. At 278–287 (SGKLAHSARP) the chain is on the cytoplasmic side. The chain crosses the membrane as a helical span at residues 288-307 (GLLMLLSTLGSFLAIGLFGL). The Periplasmic segment spans residues 308–313 (MPMWIL). A helical membrane pass occupies residues 314-336 (GVVCLALFGWLSAVSSLLQYTML). Topologically, residues 337 to 356 (QTQTPEAMLGRINGLWTAQN) are cytoplasmic. A helical membrane pass occupies residues 357–377 (VTGDAIGAALLGGLGAMMTPV). Residue Ala378 is a topological domain, periplasmic. A helical transmembrane segment spans residues 379 to 399 (SASASGFGLLIIGVLLLLVLV). The Cytoplasmic segment spans residues 400–416 (ELRRFRQTPPQVTASDS).

This sequence belongs to the major facilitator superfamily. EntS (TC 2.A.1.38) family.

It localises to the cell inner membrane. Functionally, component of an export pathway for enterobactin. This is Enterobactin exporter EntS from Escherichia coli (strain 55989 / EAEC).